Reading from the N-terminus, the 115-residue chain is IEAAKSSNNCAVPPFVGDLPIAENKEVLSIWKDYKSGEDCSNQRRETQQVIDDLPDEVRAMVFGRLPSFLNGASTDVKKMFRAIMYNRTLNYDLKKQELSKLAEEILSKKQLAEF.

The chain is OV39 antigen (OV39) from Onchocerca volvulus.